Consider the following 542-residue polypeptide: Katanin p60 ATPase-containing subunit A-like 2 (542 aa).

The region spanning 25–57 (RRKNLLILIMHYLLQEGYMDSANSLEQETKISL) is the LisH domain. Disordered regions lie at residues 94 to 126 (LDHD…RIAQ) and 142 to 168 (HAHQ…ASEI). Polar residues predominate over residues 114–126 (GSNSTQGLPRIAQ). 298-305 (GPPGTGKT) is an ATP binding site.

This sequence belongs to the AAA ATPase family. Katanin p60 subunit A1 subfamily. A-like 2 sub-subfamily.

The protein resides in the cytoplasm. It localises to the cytoskeleton. Its subcellular location is the spindle. The protein localises to the spindle pole. It catalyses the reaction n ATP + n H2O + a microtubule = n ADP + n phosphate + (n+1) alpha/beta tubulin heterodimers.. In terms of biological role, severs microtubules in vitro in an ATP-dependent manner. This activity may promote rapid reorganization of cellular microtubule arrays. This Xenopus tropicalis (Western clawed frog) protein is Katanin p60 ATPase-containing subunit A-like 2 (katnal2).